A 601-amino-acid chain; its full sequence is Kelch repeat and BTB domain-containing protein 8 (601 aa).

Positions M1–D25 are disordered. Residues L7–P22 are compositionally biased toward polar residues. Positions T49–E117 constitute a BTB domain. One can recognise a BACK domain in the interval I153–K252. Kelch repeat units lie at residues D336 to G390, K391 to E441, I443 to D481, I483 to N532, and Q542 to A588.

The protein belongs to the KBTBD8 family. As to quaternary structure, component of the BCR(KBTBD8) E3 ubiquitin ligase complex, at least composed of CUL3, KBTBD8 and RBX1.

It localises to the cytoplasm. Its subcellular location is the cytoskeleton. The protein resides in the spindle. It is found in the golgi apparatus. Substrate-specific adapter of a BCR (BTB-CUL3-RBX1) E3 ubiquitin ligase complex that acts as a regulator of neural crest specification. The BCR(KBTBD8) complex acts by mediating monoubiquitination of NOLC1 and TCOF1: monoubiquitination promotes the formation of a NOLC1-TCOF1 complex that acts as a platform to connect RNA polymerase I with enzymes responsible for ribosomal processing and modification, leading to remodel the translational program of differentiating cells in favor of neural crest specification. The sequence is that of Kelch repeat and BTB domain-containing protein 8 (KBTBD8) from Homo sapiens (Human).